The following is a 479-amino-acid chain: Aspartyl/glutamyl-tRNA(Asn/Gln) amidotransferase subunit B (479 aa).

It belongs to the GatB/GatE family. GatB subfamily. As to quaternary structure, heterotrimer of A, B and C subunits.

The enzyme catalyses L-glutamyl-tRNA(Gln) + L-glutamine + ATP + H2O = L-glutaminyl-tRNA(Gln) + L-glutamate + ADP + phosphate + H(+). The catalysed reaction is L-aspartyl-tRNA(Asn) + L-glutamine + ATP + H2O = L-asparaginyl-tRNA(Asn) + L-glutamate + ADP + phosphate + 2 H(+). In terms of biological role, allows the formation of correctly charged Asn-tRNA(Asn) or Gln-tRNA(Gln) through the transamidation of misacylated Asp-tRNA(Asn) or Glu-tRNA(Gln) in organisms which lack either or both of asparaginyl-tRNA or glutaminyl-tRNA synthetases. The reaction takes place in the presence of glutamine and ATP through an activated phospho-Asp-tRNA(Asn) or phospho-Glu-tRNA(Gln). This Streptococcus pyogenes serotype M3 (strain ATCC BAA-595 / MGAS315) protein is Aspartyl/glutamyl-tRNA(Asn/Gln) amidotransferase subunit B.